We begin with the raw amino-acid sequence, 280 residues long: Succinate dehydrogenase [ubiquinone] iron-sulfur subunit, mitochondrial (280 aa).

The N-terminal 25 residues, 1–25, are a transit peptide targeting the mitochondrion; that stretch reads MAAVCFSLSRCCSAVHRPAVTAVRF. A 2Fe-2S ferredoxin-type domain is found at 39 to 129; sequence KKFQIYRWDP…TSKVTKIYPL (91 aa). Positions 92, 97, 100, and 112 each coordinate [2Fe-2S] cluster. Positions 175–205 constitute a 4Fe-4S ferredoxin-type domain; that stretch reads DRQKLDGLYECILCACCSTSCPSYWWNADKY. Residues Cys-185, Cys-188, and Cys-191 each coordinate [4Fe-4S] cluster. Cys-195 contributes to the [3Fe-4S] cluster binding site. Residue Trp-200 participates in a ubiquinone binding. [3Fe-4S] cluster is bound by residues Cys-242 and Cys-248. Residue Cys-252 participates in [4Fe-4S] cluster binding.

The protein belongs to the succinate dehydrogenase/fumarate reductase iron-sulfur protein family. In terms of assembly, component of complex II composed of four subunits: the flavoprotein (FP) sdha, iron-sulfur protein (IP) sdhb, and a cytochrome b composed of sdhc and sdhd. The cofactor is [2Fe-2S] cluster. It depends on [3Fe-4S] cluster as a cofactor. [4Fe-4S] cluster is required as a cofactor.

It is found in the mitochondrion inner membrane. The enzyme catalyses a quinone + succinate = fumarate + a quinol. The catalysed reaction is (R)-malate + a quinone = enol-oxaloacetate + a quinol. It carries out the reaction (S)-malate + a quinone = enol-oxaloacetate + a quinol. The protein operates within carbohydrate metabolism; tricarboxylic acid cycle; fumarate from succinate (eukaryal route): step 1/1. Enol-oxaloacetate inhibits the succinate dehydrogenase activity. In terms of biological role, iron-sulfur protein (IP) subunit of the succinate dehydrogenase complex (mitochondrial respiratory chain complex II), responsible for transferring electrons from succinate to ubiquinone (coenzyme Q). SDH also oxidizes malate to the non-canonical enol form of oxaloacetate, enol-oxaloacetate. Enol-oxaloacetate, which is a potent inhibitor of the succinate dehydrogenase activity, is further isomerized into keto-oxaloacetate. The polypeptide is Succinate dehydrogenase [ubiquinone] iron-sulfur subunit, mitochondrial (sdhb) (Danio rerio (Zebrafish)).